A 925-amino-acid polypeptide reads, in one-letter code: Isoleucine--tRNA ligase (925 aa).

Residues 57–67 (PYANGDIHMGH) carry the 'HIGH' region motif. Position 556 (Glu556) interacts with L-isoleucyl-5'-AMP. The short motif at 597–601 (KMSKS) is the 'KMSKS' region element. Lys600 is a binding site for ATP. Zn(2+) contacts are provided by Cys890, Cys893, Cys910, and Cys913.

The protein belongs to the class-I aminoacyl-tRNA synthetase family. IleS type 1 subfamily. Monomer. The cofactor is Zn(2+).

The protein resides in the cytoplasm. The enzyme catalyses tRNA(Ile) + L-isoleucine + ATP = L-isoleucyl-tRNA(Ile) + AMP + diphosphate. In terms of biological role, catalyzes the attachment of isoleucine to tRNA(Ile). As IleRS can inadvertently accommodate and process structurally similar amino acids such as valine, to avoid such errors it has two additional distinct tRNA(Ile)-dependent editing activities. One activity is designated as 'pretransfer' editing and involves the hydrolysis of activated Val-AMP. The other activity is designated 'posttransfer' editing and involves deacylation of mischarged Val-tRNA(Ile). In Carboxydothermus hydrogenoformans (strain ATCC BAA-161 / DSM 6008 / Z-2901), this protein is Isoleucine--tRNA ligase.